Reading from the N-terminus, the 460-residue chain is Argininosuccinate lyase (460 aa).

Belongs to the lyase 1 family. Argininosuccinate lyase subfamily.

It is found in the cytoplasm. It catalyses the reaction 2-(N(omega)-L-arginino)succinate = fumarate + L-arginine. It participates in amino-acid biosynthesis; L-arginine biosynthesis; L-arginine from L-ornithine and carbamoyl phosphate: step 3/3. In Parvibaculum lavamentivorans (strain DS-1 / DSM 13023 / NCIMB 13966), this protein is Argininosuccinate lyase.